A 416-amino-acid chain; its full sequence is Tyrosine--tRNA ligase (416 aa).

L-tyrosine is bound at residue Y40. Residues A45–H54 carry the 'HIGH' region motif. Y177 and Q181 together coordinate L-tyrosine. Positions K237 to S241 match the 'KMSKS' region motif. K240 provides a ligand contact to ATP. The 66-residue stretch at L351–S416 folds into the S4 RNA-binding domain.

It belongs to the class-I aminoacyl-tRNA synthetase family. TyrS type 1 subfamily. As to quaternary structure, homodimer.

Its subcellular location is the cytoplasm. It carries out the reaction tRNA(Tyr) + L-tyrosine + ATP = L-tyrosyl-tRNA(Tyr) + AMP + diphosphate + H(+). Functionally, catalyzes the attachment of tyrosine to tRNA(Tyr) in a two-step reaction: tyrosine is first activated by ATP to form Tyr-AMP and then transferred to the acceptor end of tRNA(Tyr). The polypeptide is Tyrosine--tRNA ligase (Cereibacter sphaeroides (strain KD131 / KCTC 12085) (Rhodobacter sphaeroides)).